The chain runs to 2245 residues: Myosin-J heavy chain (2245 aa).

Residues 25 to 77 (QEGAGVWIPDQELGWIGADVIEHSETSADQVLVRTEDDREVKIPLSKVFQKNP) form the Myosin N-terminal SH3-like domain. The Myosin motor domain maps to 81–821 (EGVDDLSFLS…QLASLEDMRL (741 aa)). 174 to 181 (GESGAGKT) contacts ATP. The interval 646–672 (FTQSPGGHPQGNGGPTSSNTKGTSGSS) is disordered. Over residues 660–672 (PTSSNTKGTSGSS) the composition is skewed to low complexity. The actin-binding stretch occupies residues 669 to 749 (SGSSSMKFLS…GFPTRRLLSE (81 aa)). IQ domains follow at residues 824-851 (LDRSATVIQKRWKGYLYRKRYKQLRDAS), 872-901 (RTHSAILIQKVWRAHRDRVQYQKIRDASLQ), and 943-972 (KLRGIILIQARWRMKLAKRVYIQLRAEARS). Residues 973–1812 (LRTVQEQKNK…NYHMLEDRME (840 aa)) are a coiled coil. Residues 1504–1524 (KKQLTQLQQQHEQSSTQLLLA) form a disordered region. Low complexity predominate over residues 1506-1523 (QLTQLQQQHEQSSTQLLL). The 220-residue stretch at 1969-2188 (IDFIDQLQQS…IASICPPNKS (220 aa)) folds into the Dilute domain.

This sequence belongs to the TRAFAC class myosin-kinesin ATPase superfamily. Myosin family. As to quaternary structure, homodimer that associates with six light chains.

Its subcellular location is the contractile vacuole. In terms of biological role, processive motor protein that can move over long distances along F-actin without disassociating; processiveness depends on high physiological Mg(2+) concentrations. Presents a high actin affinity in the presence of ADP, fast ATP hydrolysis, and a high steady-state ATPase activity in the presence of actin that is rate limited by ADP release. Physiological decrease of free Mg(2+) ions leads to an increased rate of ADP release and shortening of the fraction of time it spends in the strong acting binding states. This chain is Myosin-J heavy chain (myoJ), found in Dictyostelium discoideum (Social amoeba).